The sequence spans 397 residues: 1-deoxy-D-xylulose 5-phosphate reductoisomerase (397 aa).

NADPH is bound by residues threonine 12, glycine 13, serine 14, isoleucine 15, glycine 38, lysine 39, asparagine 40, and asparagine 126. Residue lysine 127 coordinates 1-deoxy-D-xylulose 5-phosphate. Residue glutamate 128 participates in NADPH binding. A Mn(2+)-binding site is contributed by aspartate 152. Residues serine 153, glutamate 154, serine 188, and histidine 211 each contribute to the 1-deoxy-D-xylulose 5-phosphate site. A Mn(2+)-binding site is contributed by glutamate 154. Glycine 217 serves as a coordination point for NADPH. 1-deoxy-D-xylulose 5-phosphate contacts are provided by serine 224, asparagine 229, lysine 230, and glutamate 233. Glutamate 233 is a binding site for Mn(2+).

The protein belongs to the DXR family. Mg(2+) serves as cofactor. Requires Mn(2+) as cofactor.

The enzyme catalyses 2-C-methyl-D-erythritol 4-phosphate + NADP(+) = 1-deoxy-D-xylulose 5-phosphate + NADPH + H(+). It participates in isoprenoid biosynthesis; isopentenyl diphosphate biosynthesis via DXP pathway; isopentenyl diphosphate from 1-deoxy-D-xylulose 5-phosphate: step 1/6. In terms of biological role, catalyzes the NADPH-dependent rearrangement and reduction of 1-deoxy-D-xylulose-5-phosphate (DXP) to 2-C-methyl-D-erythritol 4-phosphate (MEP). In Haemophilus influenzae (strain 86-028NP), this protein is 1-deoxy-D-xylulose 5-phosphate reductoisomerase.